The chain runs to 530 residues: Protein SLOW WALKER 1 (530 aa).

WD repeat units follow at residues 50–89, 91–130, 133–173, 176–216, 220–258, 262–304, and 320–363; these read NLVSSVAALAFSPVHPHSLAVAHSATVSLFSSQSLSSSRR, SFRDVVSSVCFRSDGALFAACDLSGVVQVFDIKERMALRT, SHSA…VISD, GHKD…SNWI, NHGLPVEDVVYLPSGGLIATAGGNSVKVWDLIGGGKMVC, SHNK…VTYS, and GSTR…DESR. A Nuclear localization signal motif is present at residues 392–399; that stretch reads EKKGLKLT.

In terms of tissue distribution, expressed in cells undergoing active cell divisions, including functional megaspores and the female gametophytic cells. Accumulates in roots, stems, leaves, inflorescences and siliques.

The protein resides in the nucleus. It localises to the nucleolus. Functionally, essential protein required for nuclear division and organization during embryo sac development in female gametophyte, probably by promoting rRNA biogenesis essential for the progression of the mitotic division cycles during gametogenesis. Involved in nucleolar processing of pre-18S ribosomal RNA. In Arabidopsis thaliana (Mouse-ear cress), this protein is Protein SLOW WALKER 1.